We begin with the raw amino-acid sequence, 329 residues long: Malate dehydrogenase (329 aa).

Residue 12 to 18 (GAAGQIG) participates in NAD(+) binding. Arg93 and Arg99 together coordinate substrate. Residues Asn106, Gln113, and 130-132 (TGN) each bind NAD(+). Residues Asn132 and Arg163 each contribute to the substrate site. The Proton acceptor role is filled by His188.

The protein belongs to the LDH/MDH superfamily. MDH type 2 family.

It carries out the reaction (S)-malate + NAD(+) = oxaloacetate + NADH + H(+). Catalyzes the reversible oxidation of malate to oxaloacetate. The sequence is that of Malate dehydrogenase from Mycobacterium leprae (strain TN).